Reading from the N-terminus, the 167-residue chain is Probable phospholipid hydroperoxide glutathione peroxidase (167 aa).

The active site involves cysteine 41.

Belongs to the glutathione peroxidase family.

It is found in the cytoplasm. It carries out the reaction a hydroperoxy polyunsaturated fatty acid + 2 glutathione = a hydroxy polyunsaturated fatty acid + glutathione disulfide + H2O. Its function is as follows. Protects cells and enzymes from oxidative damage, by catalyzing the reduction of hydrogen peroxide, lipid peroxides and organic hydroperoxide, by glutathione. The sequence is that of Probable phospholipid hydroperoxide glutathione peroxidase (CSA) from Citrus sinensis (Sweet orange).